Here is a 316-residue protein sequence, read N- to C-terminus: Pantothenate kinase (316 aa).

96 to 103 contacts ATP; it reads GSVAVGKS.

The protein belongs to the prokaryotic pantothenate kinase family.

It is found in the cytoplasm. The catalysed reaction is (R)-pantothenate + ATP = (R)-4'-phosphopantothenate + ADP + H(+). Its pathway is cofactor biosynthesis; coenzyme A biosynthesis; CoA from (R)-pantothenate: step 1/5. This chain is Pantothenate kinase, found in Shouchella clausii (strain KSM-K16) (Alkalihalobacillus clausii).